Consider the following 150-residue polypeptide: SsrA-binding protein (150 aa).

It belongs to the SmpB family.

It is found in the cytoplasm. Its function is as follows. Required for rescue of stalled ribosomes mediated by trans-translation. Binds to transfer-messenger RNA (tmRNA), required for stable association of tmRNA with ribosomes. tmRNA and SmpB together mimic tRNA shape, replacing the anticodon stem-loop with SmpB. tmRNA is encoded by the ssrA gene; the 2 termini fold to resemble tRNA(Ala) and it encodes a 'tag peptide', a short internal open reading frame. During trans-translation Ala-aminoacylated tmRNA acts like a tRNA, entering the A-site of stalled ribosomes, displacing the stalled mRNA. The ribosome then switches to translate the ORF on the tmRNA; the nascent peptide is terminated with the 'tag peptide' encoded by the tmRNA and targeted for degradation. The ribosome is freed to recommence translation, which seems to be the essential function of trans-translation. This Magnetococcus marinus (strain ATCC BAA-1437 / JCM 17883 / MC-1) protein is SsrA-binding protein.